The primary structure comprises 670 residues: MSLGPVGMSGGMDINSMVSKIVDAERVPKQQRIDNDRTTINASISAYGRLRESLDTMKNLMANFRQEKAFAVRTVETTDDNIVSATATTDAIAGKYAIDVLQLAQSHKVASDVLPEDAKFGPGKLQISLGDDRFNIEVRSRSKLIDVVRGINGAKDNPGVRASVINDVEGPRLILASNLSGKDHQIKVSVEAERGNPLKYFEYQTLEDRVNALEEARAAAEEVLGPLQAPQQPDQPEILDENGNPLPPEAQKAADNAQDDAQDDASQEPISAAGAEAAKAGQEAIDKANQRSSLRPEERIPGWTETASGTLLDSYEEPELELDEKAIEKAPDVPGWNNAASGTLTDSYVTTKEAKQLLEQEKAEIEQKIADEKQELDAKVERGELSEEQAKQIHRAKLDPQERERLEKIDEAEAKIAKAQSSFEEYLGMTEVQAGQDSEVLLDGVAKLSSHNNVIEDAIEGVDLTLKGKSEPNKPPAEIGVEYDRQSVRSDIENFVSAYNSFYQTSQALSSVDPTTGQKGPLAGDSTVRSADSRLKAVFSSRIDQAPENLKSLTEFGITTTRQGTLEINYDMLDRQLNNNFNELEKFFGGNTGFAKRIEDAIHGITGITGSIRTREKSLTEQNYRLNDDQAALDRRMEGLEKRTHAKFTAMQDATGKMQGQLGALMSALG.

The segment at 226-300 (PLQAPQQPDQ…RSSLRPEERI (75 aa)) is disordered. A compositionally biased stretch (acidic residues) spans 257 to 266 (AQDDAQDDAS). A compositionally biased stretch (low complexity) spans 272–283 (AAGAEAAKAGQE). Positions 284–300 (AIDKANQRSSLRPEERI) are enriched in basic and acidic residues. Residues 342–428 (GTLTDSYVTT…AQSSFEEYLG (87 aa)) adopt a coiled-coil conformation.

The protein belongs to the FliD family. In terms of assembly, homopentamer.

It is found in the secreted. It localises to the bacterial flagellum. Its function is as follows. Required for the morphogenesis and for the elongation of the flagellar filament by facilitating polymerization of the flagellin monomers at the tip of growing filament. Forms a capping structure, which prevents flagellin subunits (transported through the central channel of the flagellum) from leaking out without polymerization at the distal end. Important for swimming motility. The sequence is that of Polar flagellar hook-associated protein 2 (fliDP) from Vibrio parahaemolyticus serotype O3:K6 (strain RIMD 2210633).